Here is a 504-residue protein sequence, read N- to C-terminus: Cytochrome P450 monooxygenase gliF (504 aa).

Residues Ala-13–Leu-31 traverse the membrane as a helical segment. N-linked (GlcNAc...) asparagine glycosylation is found at Asn-197 and Asn-299. Cys-449 provides a ligand contact to heme.

It belongs to the cytochrome P450 family. Heme is required as a cofactor.

It localises to the membrane. It participates in mycotoxin biosynthesis. In terms of biological role, cytochrome P450 monooxygenase; part of the gene cluster that mediates the biosynthesis of gliotoxin, a member of the epipolythiodioxopiperazine (ETP) class of toxins characterized by a disulfide bridged cyclic dipeptide. The first step in gliotoxin biosynthesis is the condensation of serine and phenylalanine to form the cyclo-L-phenylalanyl-L-serine diketopiperazine (DKP) by the NRPS gliP. GliP is also able to produce the DKP cyclo-L-tryptophanyl-L-serine, suggesting that the substrate specificity of the first adenylation (A) domain in gliP is sufficiently relaxed to accommodate both L-Phe and L-Trp. The cytochrome P450 monooxygenase gliC has been shown to catalyze the subsequent hydroxylation of the alpha-carbon of L-Phe in cyclo-L-phenylalanyl-L-serine whereas the second cytochrome P450 enzyme, gliF, is presumably involved in the modification of the DKP side chain. The glutathione S-transferase (GST) gliG then forms a bis-glutathionylated biosynthetic intermediate which is responsible for the sulfurization of gliotoxin. This bis-glutathionylated intermediate is subsequently processed by the gamma-glutamyl cyclotransferase gliK to remove both gamma-glutamyl moieties. Subsequent processing via gliI yields a biosynthetic intermediate, which is N-methylated via the N-methyltransferase gliN, before the gliotoxin oxidoreductase gliT-mediated disulfide bridge closure. GliN-mediated amide methylation confers stability to ETP, damping the spontaneous formation of tri- and tetrasulfides. Intracellular dithiol gliotoxin oxidized by gliT is subsequently effluxed by gliA. Gliotoxin contributes to pathogenesis during invasive aspergillosis. In macrophages and neutrophils, gliotoxin showed inhibition of various different cell functions including cytokine production, antigen presentation, phagocytosis, and production of reactive oxygen species. The polypeptide is Cytochrome P450 monooxygenase gliF (Aspergillus fumigatus (strain ATCC MYA-4609 / CBS 101355 / FGSC A1100 / Af293) (Neosartorya fumigata)).